A 157-amino-acid chain; its full sequence is RxLR effector protein PITG_04049 (157 aa).

The N-terminal stretch at 1–23 is a signal peptide; it reads MRLIAGVLAGFLVICEVTSTSES. The short motif at 51–65 is the RxLR-dEER element; sequence QFLRTDVVMNRGEER.

Belongs to the RxLR effector family.

It localises to the secreted. It is found in the host cytoplasm. Its subcellular location is the host nucleus. Effector that might be involved in host plant infection. The polypeptide is RxLR effector protein PITG_04049 (Phytophthora infestans (strain T30-4) (Potato late blight agent)).